A 296-amino-acid polypeptide reads, in one-letter code: Elongation factor Ts (296 aa).

The involved in Mg(2+) ion dislocation from EF-Tu stretch occupies residues 81-84 (TDFV).

This sequence belongs to the EF-Ts family.

Its subcellular location is the cytoplasm. Associates with the EF-Tu.GDP complex and induces the exchange of GDP to GTP. It remains bound to the aminoacyl-tRNA.EF-Tu.GTP complex up to the GTP hydrolysis stage on the ribosome. The protein is Elongation factor Ts of Ruthia magnifica subsp. Calyptogena magnifica.